A 417-amino-acid polypeptide reads, in one-letter code: Nucleosome assembly protein (417 aa).

Residues 1–47 (MSDPIRTKPKSSMQIDNAPTPHNTPASVLNPSYLKNGNPVRAQAQEQ) form a disordered region. A compositionally biased stretch (polar residues) spans 10–35 (KSSMQIDNAPTPHNTPASVLNPSYLK). Phosphothreonine is present on residues Thr-20 and Thr-24. Phosphoserine is present on Ser-27. A Glycyl lysine isopeptide (Lys-Gly) (interchain with G-Cter in ubiquitin) cross-link involves residue Lys-50. At Thr-53 the chain carries Phosphothreonine. A phosphoserine mark is found at Ser-69, Ser-76, Ser-82, Ser-98, Ser-104, and Ser-140. An interaction with NBA1 region spans residues 143–362 (EQPKPEQIAK…IPRAVDWFTG (220 aa)). Ser-159 and Ser-177 each carry phosphoserine; by CK2. Residues 330-356 (LEEDLEERLALDYSIGEQLKDKLIPRA) constitute a DNA-binding region (H-T-H motif). Positions 364–417 (ALEFEFEEDEEEADEDEDEEEDDDHGLEDDDGESAEEQDDFAGRPEQAPECKQS) are disordered. Residues 367 to 403 (FEFEEDEEEADEDEDEEEDDDHGLEDDDGESAEEQDD) are compositionally biased toward acidic residues. The residue at position 397 (Ser-397) is a Phosphoserine; by CK2. Residues 404 to 417 (FAGRPEQAPECKQS) show a composition bias toward basic and acidic residues.

The protein belongs to the nucleosome assembly protein (NAP) family. As to quaternary structure, component of the GIN4 complex composed of at least BNI5, CDC3, CDC10, CDC11, CDC12, GIN4, NAP1 and SHS1 which forms a ring at the bud neck. Homodimer (in-vitro). Interacts with the B-type cyclin CLB2. Interacts with 60S ribosomal protein L18 (RPL18A or RPL18B), CKA2, CKI1, eukaryotic elongation factor 1 complex eEF1A (TEF1 or TEF2), FOL1, HSC82, HTA2, HTB2, HTZ1, KAP114, KCC4, NIS1, SSA1, SSA2, SSB1, SSC1, SHM1, SIP5 and TCO89. Interacts with NBA1. Interacts with histone H3/H4 heterodimers. Phosphorylation by CK2 is required for normal progression through S phase. CK2 phosphorylation is not required for correct bud formation nor histone binding.

It localises to the cytoplasm. Its subcellular location is the nucleus. The protein resides in the bud neck. Its function is as follows. Acidic protein, which assembles histones into an octamer (in vitro). Involved in the regulation of the localization and the function of the septins during mitosis. Involved in the function of B-type cyclins. This is Nucleosome assembly protein from Saccharomyces cerevisiae (strain ATCC 204508 / S288c) (Baker's yeast).